Reading from the N-terminus, the 783-residue chain is Cadherin-5 (783 aa).

The first 25 residues, 1–25 (MQALVMLLATGATYYLGLLAAAAAA), serve as a signal peptide directing secretion. The propeptide occupies 26-45 (VNPGRPNTPGSLPAHRRQKR). 5 consecutive Cadherin domains span residues 44–149 (KRDW…WPVF), 150–256 (THRV…FPIF), 257–371 (TQNR…PPIF), 372–478 (QQPF…APEF), and 478–585 (FAKP…GEFT). Topologically, residues 46 to 599 (DWIWNQMHID…AAAQVGISIQ (554 aa)) are extracellular. The Ca(2+) site is built by glutamate 56 and glutamate 57. Asparagine 59 carries an N-linked (GlcNAc...) asparagine glycan. Residues aspartate 107, glutamate 109, aspartate 141, valine 142, asparagine 143, aspartate 144, and asparagine 145 each coordinate Ca(2+). A glycan (N-linked (GlcNAc...) asparagine) is linked at asparagine 155. Ca(2+) is bound by residues aspartate 175, aspartate 177, histidine 184, and aspartate 229. Residues asparagine 361, asparagine 441, and asparagine 523 are each glycosylated (N-linked (GlcNAc...) asparagine). The chain crosses the membrane as a helical span at residues 600-620 (ALVAIFLCILTFTVITLLIIL). The required for interaction with PALS1 stretch occupies residues 621-660 (RRRLRKQARAHGKSVPEIHEQLVTYDEEGGGEMDTTSYDV). Over 621–783 (RRRLRKQARA…GSDPQEELVY (163 aa)) the chain is Cytoplasmic.

As to quaternary structure, part of a complex composed of AMOTL2, MAGI1 and CDH5, within the complex AMOTL2 acts as a scaffold protein for the interaction of MAGI1 with CDH5. The complex is required for coupling actin fibers to cell junctions in endothelial cells. Within the complex AMOTL2 (via its N-terminus) interacts with CDH5. Interacts (via cadherin 5 domain) with PTPRB. Interacts with TRPC4. Interacts with KRIT1. Interacts with PARD3. Interacts with RTN4 (isoform B). Interacts with PALS1; the interaction promotes PALS1 localization to cell junctions and is required for CDH5-mediated vascular lumen formation and endothelial cell. Interacts with CTNND1/p120-catenin; the interaction controls CADH5 endocytosis. Phosphorylated on tyrosine residues by KDR/VEGFR-2. Dephosphorylated by PTPRB. In terms of processing, O-glycosylated.

It is found in the cell junction. Its subcellular location is the adherens junction. The protein localises to the cell membrane. The protein resides in the cytoplasm. Its function is as follows. Cadherins are calcium-dependent cell adhesion proteins. They preferentially interact with themselves in a homophilic manner in connecting cells; cadherins may thus contribute to the sorting of heterogeneous cell types. This cadherin may play a important role in endothelial cell biology through control of the cohesion and organization of the intercellular junctions. It associates with alpha-catenin forming a link to the cytoskeleton. Plays a role in coupling actin fibers to cell junctions in endothelial cells, via acting as a cell junctional complex anchor for AMOTL2 and MAGI1. Acts in concert with KRIT1 and PALS1 to establish and maintain correct endothelial cell polarity and vascular lumen. These effects are mediated by recruitment and activation of the Par polarity complex and RAP1B. Required for activation of PRKCZ and for localization of phosphorylated PRKCZ, PARD3, TIAM1 and RAP1B to the cell junction. Associates with CTNND1/p120-catenin to control CADH5 endocytosis. The chain is Cadherin-5 from Bos taurus (Bovine).